Reading from the N-terminus, the 156-residue chain is Small ribosomal subunit protein uS7c (156 aa).

The protein belongs to the universal ribosomal protein uS7 family. Part of the 30S ribosomal subunit.

Its subcellular location is the plastid. The protein localises to the chloroplast. Functionally, one of the primary rRNA binding proteins, it binds directly to 16S rRNA where it nucleates assembly of the head domain of the 30S subunit. This Chlorella vulgaris (Green alga) protein is Small ribosomal subunit protein uS7c (rps7).